A 546-amino-acid polypeptide reads, in one-letter code: CTP synthase (546 aa).

Residues 1 to 264 (MRYIVVTGGV…TKYIMKAMRL (264 aa)) are amidoligase domain. Serine 12 serves as a coordination point for CTP. Serine 12 contacts UTP. Residues 13–18 (GLGKGI) and aspartate 70 each bind ATP. Aspartate 70 and glutamate 140 together coordinate Mg(2+). Residues 147-149 (DIE), 185-190 (KTKPTQ), and lysine 221 each bind CTP. Residues 185–190 (KTKPTQ) and lysine 221 contribute to the UTP site. A Glutamine amidotransferase type-1 domain is found at 298 to 534 (GSQCTDPMKD…VEAMKAQRLR (237 aa)). Glycine 357 contacts L-glutamine. Cysteine 384 (nucleophile; for glutamine hydrolysis) is an active-site residue. Residues 385 to 388 (FGMQ), glutamate 408, and arginine 464 contribute to the L-glutamine site. Catalysis depends on residues histidine 507 and glutamate 509.

The protein belongs to the CTP synthase family. In terms of assembly, homotetramer.

It carries out the reaction UTP + L-glutamine + ATP + H2O = CTP + L-glutamate + ADP + phosphate + 2 H(+). The catalysed reaction is L-glutamine + H2O = L-glutamate + NH4(+). It catalyses the reaction UTP + NH4(+) + ATP = CTP + ADP + phosphate + 2 H(+). It participates in pyrimidine metabolism; CTP biosynthesis via de novo pathway; CTP from UDP: step 2/2. Its activity is regulated as follows. Allosterically activated by GTP, when glutamine is the substrate; GTP has no effect on the reaction when ammonia is the substrate. The allosteric effector GTP functions by stabilizing the protein conformation that binds the tetrahedral intermediate(s) formed during glutamine hydrolysis. Inhibited by the product CTP, via allosteric rather than competitive inhibition. Its function is as follows. Catalyzes the ATP-dependent amination of UTP to CTP with either L-glutamine or ammonia as the source of nitrogen. Regulates intracellular CTP levels through interactions with the four ribonucleotide triphosphates. In Methanothrix thermoacetophila (strain DSM 6194 / JCM 14653 / NBRC 101360 / PT) (Methanosaeta thermophila), this protein is CTP synthase.